The sequence spans 1866 residues: Rho GTPase-activating protein 100F (1866 aa).

Disordered stretches follow at residues 22-98 (MLCC…AGVK), 262-336 (RRGN…NNYS), and 466-530 (LRSS…DTEA). A compositionally biased stretch (low complexity) spans 59–77 (GNQQHHGNQQHHGNQQQHH). The region spanning 179–264 (LVEIVKRPGQ…LVLAIRQRRG (86 aa)) is the PDZ domain. A compositionally biased stretch (pro residues) spans 271–286 (PGPPTLSRPEQKPPPV). Residues 301-326 (TDRMPRPRSSRDRRTGDGREMTESRS) show a composition bias toward basic and acidic residues. Serine 719 is subject to Phosphoserine. Residues 745–775 (AGPASPSGSILSTGGHQSPAPTPSATLPRPH) form a disordered region. Over residues 750–760 (PSGSILSTGGH) the composition is skewed to polar residues. A C2 domain is found at 789–908 (KLDKPIVDIG…LRQSPLHQLA (120 aa)). The 201-residue stretch at 948-1148 (ADLETVVNRE…YLLQIWPQPQ (201 aa)) folds into the Rho-GAP domain. Disordered stretches follow at residues 1273 to 1328 (GGSV…QVKI), 1356 to 1380 (PTTQ…RRGN), 1393 to 1479 (SVVN…DLVS), 1514 to 1607 (FTPI…MVST), 1644 to 1727 (YTND…YGTL), and 1819 to 1840 (DEKP…ADKG). Residues 1282-1292 (DPSPLPLPGTP) are compositionally biased toward pro residues. Over residues 1293-1302 (SPGSSSASTG) the composition is skewed to low complexity. Polar residues-rich tracts occupy residues 1356 to 1377 (PTTQ…TASR), 1393 to 1408 (SVVN…YTGS), and 1416 to 1429 (GNSS…NASG). Low complexity predominate over residues 1443–1479 (SSATSSSSSSQATVLSAGSTATSAPTTSSDDSDDLVS). The span at 1538 to 1587 (QLVTPISGSSSKPGATTGAISKYTTGSVESSINANSQKLSSPSRLCNSKD) shows a compositional bias: polar residues. Low complexity-rich tracts occupy residues 1590 to 1607 (SRTG…MVST) and 1644 to 1658 (YTND…SSKS). Positions 1659–1670 (GIGGGSGTGLGA) are enriched in gly residues. 2 stretches are compositionally biased toward low complexity: residues 1671-1688 (VSGA…LFGS) and 1696-1720 (GSSH…NHNT). A compositionally biased stretch (basic and acidic residues) spans 1830-1839 (HGEEKLGADK).

In terms of assembly, interacts (via PDZ domain) with Nrx-1; may recruit Nrx-1 to the presynaptic active zone.

It localises to the presynapse. GTPase activator for the Rho-type GTPases by converting them to an inactive GDP-bound state. Promotes the anchoring of Liprin-alpha clusters at synapses. Recruits and keeps Nrx-1 levels high in active zones in the presynapse opposite the postsynaptic region. This Drosophila melanogaster (Fruit fly) protein is Rho GTPase-activating protein 100F (RhoGAP100F).